Consider the following 413-residue polypeptide: uncharacterized protein (413 aa).

A helical transmembrane segment spans residues 14–34 (LLFFTVVIIPIFYYIYKIVYL). N-linked (GlcNAc...) asparagine; by host glycans are attached at residues asparagine 46, asparagine 55, asparagine 103, asparagine 171, asparagine 179, asparagine 184, asparagine 220, asparagine 252, asparagine 260, asparagine 273, asparagine 362, asparagine 366, asparagine 374, asparagine 378, asparagine 393, and asparagine 408. A compositionally biased stretch (low complexity) spans 250–263 (TKNSTETNSDNNSE). The segment at 250-277 (TKNSTETNSDNNSEIVSETNSETNYSTP) is disordered. Positions 264-277 (IVSETNSETNYSTP) are enriched in polar residues.

It is found in the membrane. This is an uncharacterized protein from Acanthamoeba polyphaga (Amoeba).